The sequence spans 177 residues: Phosphatidylglycerol/phosphatidylinositol transfer protein (177 aa).

Residues 1–17 form the signal peptide; sequence MRLSAAVIALLSTSAAA. Residues 18 to 30 constitute a propeptide that is removed on maturation; it reads FSVYRENSVSAND.

Belongs to the NPC2 family. As to quaternary structure, monomer.

Its function is as follows. Catalyzes the intermembrane transfer of phosphatidylglycerol and phosphatidylinositol. In Neurospora crassa (strain ATCC 24698 / 74-OR23-1A / CBS 708.71 / DSM 1257 / FGSC 987), this protein is Phosphatidylglycerol/phosphatidylinositol transfer protein (npc-2).